We begin with the raw amino-acid sequence, 109 residues long: Cell division suppressor protein YneA (109 aa).

A LysM domain is found at 39-90; that stretch reads SEVNVSEGDSLWALADQYAGKSDMAKADFVSWVEKENNLADGHVEAGDSVVI.

It belongs to the YneA family.

It localises to the cytoplasm. Inhibits cell division during the SOS response. Affects a later stage of the cell division protein assembly, after the assembly of the Z ring, by probably suppressing recruitment of FtsL and/or DivIC to the division machinery. The polypeptide is Cell division suppressor protein YneA (Listeria monocytogenes serotype 4b (strain CLIP80459)).